Here is an 871-residue protein sequence, read N- to C-terminus: Leucine--tRNA ligase (871 aa).

The 'HIGH' region signature appears at 42–52 (PYPSGSLHMGH). A 'KMSKS' region motif is present at residues 634 to 638 (TMSKS). Lys637 provides a ligand contact to ATP.

This sequence belongs to the class-I aminoacyl-tRNA synthetase family.

The protein localises to the cytoplasm. The enzyme catalyses tRNA(Leu) + L-leucine + ATP = L-leucyl-tRNA(Leu) + AMP + diphosphate. The polypeptide is Leucine--tRNA ligase (Nostoc punctiforme (strain ATCC 29133 / PCC 73102)).